The primary structure comprises 327 residues: Phenylalanine--tRNA ligase alpha subunit (327 aa).

Residue Glu252 participates in Mg(2+) binding.

It belongs to the class-II aminoacyl-tRNA synthetase family. Phe-tRNA synthetase alpha subunit type 1 subfamily. Tetramer of two alpha and two beta subunits. The cofactor is Mg(2+).

Its subcellular location is the cytoplasm. The catalysed reaction is tRNA(Phe) + L-phenylalanine + ATP = L-phenylalanyl-tRNA(Phe) + AMP + diphosphate + H(+). This Shewanella sediminis (strain HAW-EB3) protein is Phenylalanine--tRNA ligase alpha subunit.